The primary structure comprises 396 residues: Penicillopepsin-1 (396 aa).

The first 20 residues, 1-20 (MVVFSKVTASLACFSAVVSA), serve as a signal peptide directing secretion. A propeptide spans 21–72 (AAVPVKSPRQGFSVNQVQKTVTGTRTVNLPGVYANALAKYGATVPANVHAAA) (activation peptide). In terms of domain architecture, Peptidase A1 spans 88-393 (YLTPVKIGES…DAEGPRLGFA (306 aa)). Catalysis depends on residues Asp-104 and Asp-285. An N-linked (GlcNAc...) asparagine glycan is attached at Asn-311. Cys-321 and Cys-356 form a disulfide bridge.

Belongs to the peptidase A1 family. In terms of assembly, monomer.

The protein resides in the secreted. It carries out the reaction Hydrolysis of proteins with broad specificity similar to that of pepsin A, preferring hydrophobic residues at P1 and P1', but also cleaving 20-Gly-|-Glu-21 in the B chain of insulin. Clots milk, and activates trypsinogen.. Functionally, secreted aspartic endopeptidase that allows assimilation of proteinaceous substrates. The scissile peptide bond is attacked by a nucleophilic water molecule activated by two aspartic residues in the active site. Shows a broad primary substrate specificity. Favors hydrophobic residues at the P1 and P1' positions, but can also activate trypsinogen and hydrolyze the B chain of insulin between positions 'Gly-20' and 'Glu-21'. In Penicillium rubens (strain ATCC 28089 / DSM 1075 / NRRL 1951 / Wisconsin 54-1255) (Penicillium chrysogenum), this protein is Penicillopepsin-1 (pepA).